A 566-amino-acid polypeptide reads, in one-letter code: Alpha-amylase (566 aa).

The first 28 residues, 1-28 (MARRLATASLAVLAAAATALTAPTPAAA), serve as a signal peptide directing secretion. Residues Asn-120, Gln-166, and Asp-175 each coordinate Ca(2+). The active-site Nucleophile is Asp-205. His-209 is a binding site for Ca(2+). The active-site Proton donor is Glu-232. A CBM20 domain is found at 465–566 (GPGTGQTSAS…ALTLNDTWRG (102 aa)).

This sequence belongs to the glycosyl hydrolase 13 family. Monomer. Ca(2+) is required as a cofactor.

It carries out the reaction Endohydrolysis of (1-&gt;4)-alpha-D-glucosidic linkages in polysaccharides containing three or more (1-&gt;4)-alpha-linked D-glucose units.. The protein is Alpha-amylase (amy) of Streptomyces griseus.